Consider the following 331-residue polypeptide: Hyaluronidase A (331 aa).

Intrachain disulfides connect cysteine 19–cysteine 308 and cysteine 185–cysteine 197. N-linked (GlcNAc...) asparagine glycosylation is found at asparagine 79 and asparagine 99. The active-site Proton donor is glutamate 109. Asparagine 127 carries an N-linked (GlcNAc...) asparagine glycan. N-linked (GlcNAc...) asparagine glycosylation is present at asparagine 325.

It belongs to the glycosyl hydrolase 56 family. Expressed by the venom gland.

The protein localises to the secreted. The enzyme catalyses Random hydrolysis of (1-&gt;4)-linkages between N-acetyl-beta-D-glucosamine and D-glucuronate residues in hyaluronate.. Hydrolyzes high molecular weight hyaluronic acid to produce small oligosaccharides. The protein is Hyaluronidase A of Vespula vulgaris (Yellow jacket).